The primary structure comprises 644 residues: 3-isopropylmalate dehydratase (644 aa).

[4Fe-4S] cluster contacts are provided by cysteine 400, cysteine 460, and cysteine 463. The tract at residues 521-568 (SEIPGTPKQSPRQEVVAEFESEEDDVDSSSVDSAPVATPPSTGDSAGM) is disordered. Acidic residues predominate over residues 537–547 (AEFESEEDDVD).

This sequence belongs to the aconitase/IPM isomerase family. Monomer. It depends on [4Fe-4S] cluster as a cofactor.

It carries out the reaction (2R,3S)-3-isopropylmalate = (2S)-2-isopropylmalate. Its pathway is amino-acid biosynthesis; L-leucine biosynthesis; L-leucine from 3-methyl-2-oxobutanoate: step 2/4. Functionally, catalyzes the isomerization between 2-isopropylmalate and 3-isopropylmalate, via the formation of 2-isopropylmaleate. This chain is 3-isopropylmalate dehydratase (LEUA), found in Mucor circinelloides f. lusitanicus (Mucor racemosus var. lusitanicus).